A 397-amino-acid chain; its full sequence is Acetate kinase 1 (397 aa).

Asn-8 is a Mg(2+) binding site. Lys-15 is an ATP binding site. Arg-89 contacts substrate. Asp-146 acts as the Proton donor/acceptor in catalysis. ATP contacts are provided by residues His-206–Gly-210, Asp-281–Arg-283, and Gly-329–Asn-333. Residue Glu-380 participates in Mg(2+) binding.

It belongs to the acetokinase family. As to quaternary structure, homodimer. Mg(2+) serves as cofactor. The cofactor is Mn(2+).

Its subcellular location is the cytoplasm. It catalyses the reaction acetate + ATP = acetyl phosphate + ADP. It participates in metabolic intermediate biosynthesis; acetyl-CoA biosynthesis; acetyl-CoA from acetate: step 1/2. Functionally, catalyzes the formation of acetyl phosphate from acetate and ATP. Can also catalyze the reverse reaction. This is Acetate kinase 1 from Listeria monocytogenes serotype 4b (strain F2365).